We begin with the raw amino-acid sequence, 687 residues long: SLCO1B3-SLCO1B7 readthrough transcript protein (687 aa).

Over 1 to 29 (MDQHQHLNKTAESASSEKKKTRRCNGFKM) the chain is Cytoplasmic. A helical transmembrane segment spans residues 30–50 (FLAALSFSYIAKALGGIIMKI). Residues 51–63 (SITQIERRFDISS) are Extracellular-facing. A helical membrane pass occupies residues 64 to 84 (SLAGLIDGSFEIGNLLVIVFV). Residues 85–96 (SYFGSKLHRPKL) lie on the Cytoplasmic side of the membrane. The helical transmembrane segment at 97-117 (IGIGCLLMGTGSILTSLPHFF) threads the bilayer. Residues 118-170 (MGYYRYSKETNIDPSENSTSNLPNCLINQMLSLNRTPSEIIERGCVKESGSHM) are Extracellular-facing. N-linked (GlcNAc...) asparagine glycosylation is found at N134 and N151. Residues 171–191 (WIYVFMGNMLRGIGETPIVPL) form a helical membrane-spanning segment. At 192 to 206 (GISYIDDFAKEGHSS) the chain is on the cytoplasmic side. Residues 207-227 (LYLGTVNVMGMTGLVFAFMLG) form a helical membrane-spanning segment. Residues 228–258 (SLFAKMYVDIGYVDLSTIRITPKDSRWVGAW) are Extracellular-facing. The helical transmembrane segment at 259–279 (WLGFLVSGIVSIISSIPFFFL) threads the bilayer. The Cytoplasmic portion of the chain corresponds to 280-339 (PLNPNKPQKERKVSLFLHVLKTNDKRNQIANLTNRRKYITKNVTGFFQSLKSILTNPLYV). The helical transmembrane segment at 340–360 (IFVIFTLLHMSSYIASLTYII) threads the bilayer. Residues 361-376 (KMVEQQYGWSASKTNF) lie on the Extracellular side of the membrane. Residues 377 to 397 (LLGVLALPAVAIGMFSGGYII) traverse the membrane as a helical segment. Over 398–409 (KKFKLSLVGLAK) the chain is Cytoplasmic. The helical transmembrane segment at 410 to 430 (LAFCSATVHLLSQVLYFFLIC) threads the bilayer. The Extracellular portion of the chain corresponds to 431 to 539 (ESKSVAGLTL…CTRKSYVYFV (109 aa)). Residues 453 to 508 (DVPLSYCNSECNCDESQWEPVCGNNGITYLSPCLAGCKSSSGNKEPIVFYNCSCVE) form the Kazal-like domain. 3 cysteine pairs are disulfide-bonded: C459–C489, C465–C485, and C474–C506. N503 and N516 each carry an N-linked (GlcNAc...) asparagine glycan. A helical transmembrane segment spans residues 540–560 (IQVLDAFLCAVGLTSYSVLVI). Over 561–568 (RIVQPELK) the chain is Cytoplasmic. A helical membrane pass occupies residues 569 to 589 (ALAIGFHSMIMRSLGGILVPI). Residues 590–624 (YFGALIDTTCMKWSTNSCGARGACRIYNSTYLGRA) are Extracellular-facing. A glycan (N-linked (GlcNAc...) asparagine) is linked at N617. The chain crosses the membrane as a helical span at residues 625–645 (FFGLKVALIFPVLVLLTVFIF). Over 646 to 687 (VVRKKSHGKDTKVLENERQVMDEANLEFLNDSEHFVPSAEEQ) the chain is Cytoplasmic.

The protein belongs to the organo anion transporter (TC 2.A.60) family. Expressed in the perivenular areas (centrilobular) of the liver (at protein level).

It localises to the smooth endoplasmic reticulum membrane. The protein resides in the cell membrane. It is found in the endoplasmic reticulum membrane. It catalyses the reaction 17beta-estradiol 17-O-(beta-D-glucuronate)(out) = 17beta-estradiol 17-O-(beta-D-glucuronate)(in). The enzyme catalyses dehydroepiandrosterone 3-sulfate(out) = dehydroepiandrosterone 3-sulfate(in). The catalysed reaction is taurocholate(out) = taurocholate(in). It carries out the reaction lithocholate(out) = lithocholate(in). Transport activity is induced by farnesoid X receptor (FXR) agonists such as chenodeoxycholate. Functionally, mediates the Na(+)-independent uptake of organic anions. Transports the conjugated steroids 17-beta-glucuronosyl estradiol (17beta-estradiol 17-O-(beta-D-glucuronate) or E2G) and dehydroepiandrosterone 3-sulfate (DHEAS) at the smooth endoplasmic reticulum membrane (SER), granting access to metabolizing enzymes. Contributes to the metabolism of bile acids such as taurocholate (cholyltaurine) and lithocholate, by functioning as a doorway between SER and cytosol, thereby decreasing their circulating levels and protecting the organism from their detergent properties. Regulates access or exit of drugs to the SER lumen. This is SLCO1B3-SLCO1B7 readthrough transcript protein from Homo sapiens (Human).